The chain runs to 432 residues: Nuclear pore complex-interacting protein family member B9 (432 aa).

2 disordered regions span residues 260-280 (RMGR…NSLS) and 353-420 (SPLP…LRTR). Positions 270–280 (QQHSITDNSLS) are enriched in polar residues. Basic and acidic residues predominate over residues 374–402 (EVEKPPKPKRWRVDEVEQSPKPKRQREAE). Residues 408 to 420 (KPKRRRLSKLRTR) show a composition bias toward basic residues.

It belongs to the NPIP family.

The protein is Nuclear pore complex-interacting protein family member B9 (NPIPB9) of Homo sapiens (Human).